We begin with the raw amino-acid sequence, 656 residues long: DNA ligase (656 aa).

NAD(+) is bound by residues 32–36 and 81–82; these read DAVYD and SL. The N6-AMP-lysine intermediate role is filled by Lys112. The NAD(+) site is built by Arg133, Glu167, and Lys306. 4 residues coordinate Zn(2+): Cys400, Cys403, Cys416, and Cys421. The BRCT domain occupies 577-656; sequence KSSSVFSDKT…ELLKRLKELD (80 aa).

The protein belongs to the NAD-dependent DNA ligase family. LigA subfamily. It depends on Mg(2+) as a cofactor. Requires Mn(2+) as cofactor.

It catalyses the reaction NAD(+) + (deoxyribonucleotide)n-3'-hydroxyl + 5'-phospho-(deoxyribonucleotide)m = (deoxyribonucleotide)n+m + AMP + beta-nicotinamide D-nucleotide.. Functionally, DNA ligase that catalyzes the formation of phosphodiester linkages between 5'-phosphoryl and 3'-hydroxyl groups in double-stranded DNA using NAD as a coenzyme and as the energy source for the reaction. It is essential for DNA replication and repair of damaged DNA. The chain is DNA ligase from Helicobacter pylori (strain J99 / ATCC 700824) (Campylobacter pylori J99).